The following is a 109-amino-acid chain: Large ribosomal subunit protein uL22 (109 aa).

It belongs to the universal ribosomal protein uL22 family. Part of the 50S ribosomal subunit.

This protein binds specifically to 23S rRNA; its binding is stimulated by other ribosomal proteins, e.g. L4, L17, and L20. It is important during the early stages of 50S assembly. It makes multiple contacts with different domains of the 23S rRNA in the assembled 50S subunit and ribosome. Its function is as follows. The globular domain of the protein is located near the polypeptide exit tunnel on the outside of the subunit, while an extended beta-hairpin is found that lines the wall of the exit tunnel in the center of the 70S ribosome. The chain is Large ribosomal subunit protein uL22 from Ralstonia pickettii (strain 12J).